Reading from the N-terminus, the 181-residue chain is Adenine phosphoribosyltransferase (181 aa).

This sequence belongs to the purine/pyrimidine phosphoribosyltransferase family. In terms of assembly, homodimer.

The protein resides in the cytoplasm. It carries out the reaction AMP + diphosphate = 5-phospho-alpha-D-ribose 1-diphosphate + adenine. Its pathway is purine metabolism; AMP biosynthesis via salvage pathway; AMP from adenine: step 1/1. Catalyzes a salvage reaction resulting in the formation of AMP, that is energically less costly than de novo synthesis. The polypeptide is Adenine phosphoribosyltransferase (Brucella suis (strain ATCC 23445 / NCTC 10510)).